The primary structure comprises 330 residues: Glycerol-3-phosphate dehydrogenase [NAD(P)+] (330 aa).

Residues serine 10, tryptophan 11, arginine 31, and lysine 105 each contribute to the NADPH site. Sn-glycerol 3-phosphate is bound by residues lysine 105, glycine 135, and serine 137. Alanine 139 provides a ligand contact to NADPH. Residues lysine 190, aspartate 243, serine 253, arginine 254, and asparagine 255 each coordinate sn-glycerol 3-phosphate. Residue lysine 190 is the Proton acceptor of the active site. NADPH is bound at residue arginine 254. NADPH-binding residues include valine 278 and glutamate 280.

Belongs to the NAD-dependent glycerol-3-phosphate dehydrogenase family.

Its subcellular location is the cytoplasm. It carries out the reaction sn-glycerol 3-phosphate + NAD(+) = dihydroxyacetone phosphate + NADH + H(+). The catalysed reaction is sn-glycerol 3-phosphate + NADP(+) = dihydroxyacetone phosphate + NADPH + H(+). It participates in membrane lipid metabolism; glycerophospholipid metabolism. Its function is as follows. Catalyzes the reduction of the glycolytic intermediate dihydroxyacetone phosphate (DHAP) to sn-glycerol 3-phosphate (G3P), the key precursor for phospholipid synthesis. This is Glycerol-3-phosphate dehydrogenase [NAD(P)+] from Oleidesulfovibrio alaskensis (strain ATCC BAA-1058 / DSM 17464 / G20) (Desulfovibrio alaskensis).